The following is a 230-amino-acid chain: Cytidylate kinase (230 aa).

Position 12 to 20 (12 to 20 (GPSGAGKGT)) interacts with ATP.

This sequence belongs to the cytidylate kinase family. Type 1 subfamily.

The protein localises to the cytoplasm. The enzyme catalyses CMP + ATP = CDP + ADP. It carries out the reaction dCMP + ATP = dCDP + ADP. The protein is Cytidylate kinase of Shewanella sp. (strain MR-4).